The following is a 580-amino-acid chain: uncharacterized protein (580 aa).

This is an uncharacterized protein from Methanocaldococcus jannaschii (strain ATCC 43067 / DSM 2661 / JAL-1 / JCM 10045 / NBRC 100440) (Methanococcus jannaschii).